The following is a 199-amino-acid chain: Nucleoside triphosphate pyrophosphatase (199 aa).

D76 (proton acceptor) is an active-site residue.

Belongs to the Maf family. A divalent metal cation serves as cofactor.

It is found in the cytoplasm. It catalyses the reaction a ribonucleoside 5'-triphosphate + H2O = a ribonucleoside 5'-phosphate + diphosphate + H(+). The catalysed reaction is a 2'-deoxyribonucleoside 5'-triphosphate + H2O = a 2'-deoxyribonucleoside 5'-phosphate + diphosphate + H(+). In terms of biological role, nucleoside triphosphate pyrophosphatase. May have a dual role in cell division arrest and in preventing the incorporation of modified nucleotides into cellular nucleic acids. The chain is Nucleoside triphosphate pyrophosphatase from Caulobacter vibrioides (strain ATCC 19089 / CIP 103742 / CB 15) (Caulobacter crescentus).